The sequence spans 157 residues: 2-C-methyl-D-erythritol 2,4-cyclodiphosphate synthase (157 aa).

Positions 8 and 10 each coordinate a divalent metal cation. Residues 8-10 (DVH) and 34-35 (HS) each bind 4-CDP-2-C-methyl-D-erythritol 2-phosphate. Histidine 42 is a binding site for a divalent metal cation. Residues 56 to 58 (DIG), 61 to 65 (FPDTD), 100 to 106 (AQAPKMA), 132 to 135 (TTTE), phenylalanine 139, and arginine 142 each bind 4-CDP-2-C-methyl-D-erythritol 2-phosphate.

Belongs to the IspF family. In terms of assembly, homotrimer. Requires a divalent metal cation as cofactor.

It carries out the reaction 4-CDP-2-C-methyl-D-erythritol 2-phosphate = 2-C-methyl-D-erythritol 2,4-cyclic diphosphate + CMP. The protein operates within isoprenoid biosynthesis; isopentenyl diphosphate biosynthesis via DXP pathway; isopentenyl diphosphate from 1-deoxy-D-xylulose 5-phosphate: step 4/6. Functionally, involved in the biosynthesis of isopentenyl diphosphate (IPP) and dimethylallyl diphosphate (DMAPP), two major building blocks of isoprenoid compounds. Catalyzes the conversion of 4-diphosphocytidyl-2-C-methyl-D-erythritol 2-phosphate (CDP-ME2P) to 2-C-methyl-D-erythritol 2,4-cyclodiphosphate (ME-CPP) with a corresponding release of cytidine 5-monophosphate (CMP). The chain is 2-C-methyl-D-erythritol 2,4-cyclodiphosphate synthase from Pseudomonas fluorescens (strain ATCC BAA-477 / NRRL B-23932 / Pf-5).